Here is a 154-residue protein sequence, read N- to C-terminus: MEKRMSKTELTRHEIREKALQALFPLDFNADLTKQDAIDYALAYDNREIVSEDGEDLVPTYLDLLVGGVCSRKAELDEVITNHLGNNWSMQRLAKIDIVILRLAIFEMLYVSDVPNIVALNEAVELSKKYSDDRSRKFVNGVLSNVMKEIDSEA.

The protein belongs to the NusB family.

Functionally, involved in transcription antitermination. Required for transcription of ribosomal RNA (rRNA) genes. Binds specifically to the boxA antiterminator sequence of the ribosomal RNA (rrn) operons. The protein is Transcription antitermination protein NusB of Enterococcus faecalis (strain ATCC 700802 / V583).